The sequence spans 430 residues: Aspartate aminotransferase, mitochondrial (430 aa).

Residues 1-29 (MALLHSGRFLSGVAAAFHPGLAAAASARA) constitute a mitochondrion transit peptide. Threonine 48 bears the Phosphothreonine mark. Lysine 59 is modified (N6-acetyllysine). Residue glycine 65 coordinates substrate. Residue lysine 73 is modified to N6-acetyllysine; alternate. Lysine 73 bears the N6-succinyllysine; alternate mark. Lysine 82 is subject to N6-acetyllysine. Residue lysine 90 is modified to N6-acetyllysine; alternate. N6-succinyllysine; alternate is present on lysine 90. Tyrosine 96 is subject to 3'-nitrotyrosine; alternate. Tyrosine 96 is modified (phosphotyrosine; alternate). N6-acetyllysine; alternate occurs at positions 107 and 122. Residues lysine 107 and lysine 122 each carry the N6-succinyllysine; alternate modification. At serine 143 the chain carries Phosphoserine. Lysine 159 carries the N6-acetyllysine; alternate modification. The residue at position 159 (lysine 159) is an N6-succinyllysine; alternate. Tryptophan 162 contributes to the substrate binding site. Residue lysine 185 is modified to N6-acetyllysine; alternate. An N6-succinyllysine; alternate modification is found at lysine 185. Substrate is bound at residue asparagine 215. At lysine 227 the chain carries N6-succinyllysine. N6-acetyllysine is present on lysine 234. N6-acetyllysine; alternate occurs at positions 279 and 296. N6-(pyridoxal phosphate)lysine; alternate is present on lysine 279. Lysine 296 carries the post-translational modification N6-succinyllysine; alternate. An N6-acetyllysine modification is found at lysine 302. N6-acetyllysine; alternate is present on lysine 309. Lysine 309 bears the N6-succinyllysine; alternate mark. Position 313 is an asymmetric dimethylarginine (arginine 313). Position 338 is an N6-acetyllysine; alternate (lysine 338). At lysine 338 the chain carries N6-succinyllysine; alternate. Lysine 345 bears the N6-acetyllysine mark. An N6-acetyllysine; alternate modification is found at lysine 363. Lysine 363 is subject to N6-succinyllysine; alternate. 2 positions are modified to N6-acetyllysine: lysine 364 and lysine 387. An N6-acetyllysine; alternate mark is found at lysine 396 and lysine 404. Lysine 396 and lysine 404 each carry N6-succinyllysine; alternate. Arginine 407 serves as a coordination point for substrate.

The protein belongs to the class-I pyridoxal-phosphate-dependent aminotransferase family. Homodimer. It depends on pyridoxal 5'-phosphate as a cofactor.

It localises to the mitochondrion matrix. The protein localises to the cell membrane. The catalysed reaction is L-aspartate + 2-oxoglutarate = oxaloacetate + L-glutamate. The enzyme catalyses L-kynurenine + 2-oxoglutarate = 4-(2-aminophenyl)-2,4-dioxobutanoate + L-glutamate. In terms of biological role, catalyzes the irreversible transamination of the L-tryptophan metabolite L-kynurenine to form kynurenic acid (KA). As a member of the malate-aspartate shuttle, it has a key role in the intracellular NAD(H) redox balance. Is important for metabolite exchange between mitochondria and cytosol, and for amino acid metabolism. Facilitates cellular uptake of long-chain free fatty acids. The protein is Aspartate aminotransferase, mitochondrial (GOT2) of Bos taurus (Bovine).